A 1766-amino-acid polypeptide reads, in one-letter code: MSGGAALPVSQMELHKVNEVQFEIFKERQIKSYAVCLVEHAKSYANAADQSGEASMICVWVPLTSNSACETCHRKHPECPGHFGYIELAEPVFNIGVFDLVLLVLKCVCKTCGALLLNTREQDVHKKLQHMTGLNRLRQVAKMAEAKCRVSTSTEDDMGIDGFDSAPFNGGSGMGPGATRGCGASQPRVSRFYGIYPTLVIKAVHEEQDAEWHADKVRQVLDRVSDDDARLMGFDPQRCHPRDLVLTVLPVPPPQVRPAISFGGLRSDDELTHQIMSIVKRNNQLRRDKESDVQAAIDRSRALLQEHVATYFNNASTYYKPTKVNDTKKLKSLTERLKGKYGRLRGNLMGKRVDFSARTVITGDPNIDVDEVGVPFSVAMTLTFPERVNTINKKRLTEFARRTVYPSANYIHHPNGTITKLALLRDRSKVTLNIGDVVERHVINGDVVLFNRQPTLHRMSMMGHRVRVLNYNTFRLNLSCTTPYNADFDGDEMNLHVPQSLLTKAELIEMMMVPKNFVSPNKSAPCMGIVQDSLLGSYRLTDKDTFLDKYFVQSVALWLDLWQLPIPAILKPRPLWTGKQVFSLILPEVNHPATPQDRPPFPHNDSVVMIRRGQLLCGPITKSIVGAAPGSLIHVIFNEHGSDEVARFINGVQRVTTFFLLNFGFSVGVQDTVADSDTLRQMNDVLVKTRRNVEKIGAAANNRTLNRKAGMTLLQSFEADVNSALNKCREEAAKKALSNVRRTNSFKVMIEAGSKGTDLNICQIAVFVGQQNVAGSRIPFGFRRRTLPHFMLDDYGETSRGMANRGYVEGLKPHEFFFHTMAGREGLIDTAVKTSDTGYLQRKLIKALEDVHAAYDGTVRNANDELIQFMYGEDGLDGARIEGGQLFPLPFRDDKEMEDTYKYEYDVDGTFSGKVGGNYMDPHVRKMLRADPQNVRKLQEEYEQLTADREWSRKMLDLEDRDKLKLNLPVNPGRLIQNARSTMGKRSQVSNLSPITIIDHVRKLQEDLMKLFPSYHRGGDGYIRNTLSRERIESALTLFNVHLRQLLASKRVLKEYKLNDRAFEYLLKEIRTKYHQSLTTPGENIGAIAAQSCGEPATQMTLNTFHNAGISSKNVTLGVPRLLELLNVSRNQKHASMTVSLFPPYDEKRNAQKAQHLIEYCTLESITRRIQFIYDPDPRHTVVEADRDILELEWNVMDESDAELRIQEVVAGSPWVVRLELDVDMVTDKALDMKDVKQAILRVDESYIIETGMANNVRQRTIRMRSRYNEGADSIPKLKREIPALLARVHLRGIPGVRRALLKDTTEFTVDQATGKMSGNKIWAIDTDGTALRRAFIGVVGEDGKNIINAVKTSSNKVPEVCSLLGIEAARSKMLTELREAYLAYGLNINYRHYTILVDTICQHGYLMAVSRSGINRSDTSGPLMRCSFEETVKVLMAAASFGECDPVRGVSANLVLGNQARVGTGLFDLVLNMAALQQAVPQAEAVAPGKDVNVYHSLGSTLQQNIQSSIAYRPRDHDATPFVNNASLFLRQGFGGGSSSAPVTASAPYNPSTTYHGGRLEASAVHRSQAYSTSPALEYGGREASASQMYSVMSSASAFNPVSTRMSSVAHSYSEYSEASSYHLQHSVAPTSMQASLPRTDNSMTMQGIGSVSVPYTPHAMSSAAPPSQVYASTEVGRSHSEDSRSQSALYVPTLSPTHAGYAIRGDEPSTHRSDSNVMWREAGGGREQDEEDDLSTNYMPTAKTPQQAAPPTAAEFGDEEEEEQ.

Zn(2+) is bound by residues Cys-69, Cys-72, Cys-79, and His-82. 3 residues coordinate Mg(2+): Asp-487, Asp-489, and Asp-491. The segment at Pro-813 to Glu-825 is bridging helix. Residues His-1660–Gln-1766 form a disordered region. Residues Arg-1706–Asp-1716 are compositionally biased toward basic and acidic residues. The span at Pro-1742–Ala-1756 shows a compositional bias: low complexity.

The protein belongs to the RNA polymerase beta' chain family. In terms of assembly, component of the RNA polymerase II (Pol II) complex consisting of 12 subunits.

Its subcellular location is the nucleus. It catalyses the reaction RNA(n) + a ribonucleoside 5'-triphosphate = RNA(n+1) + diphosphate. Its function is as follows. DNA-dependent RNA polymerase catalyzes the transcription of DNA into RNA using the four ribonucleoside triphosphates as substrates. Largest and catalytic component of RNA polymerase II which synthesizes mRNA precursors and many functional non-coding RNAs. Forms the polymerase active center together with the second largest subunit. Pol II is the central component of the basal RNA polymerase II transcription machinery. It is composed of mobile elements that move relative to each other. RPB1 is part of the core element with the central large cleft, the clamp element that moves to open and close the cleft and the jaws that are thought to grab the incoming DNA template. At the start of transcription, a single-stranded DNA template strand of the promoter is positioned within the central active site cleft of Pol II. A bridging helix emanates from RPB1 and crosses the cleft near the catalytic site and is thought to promote translocation of Pol II by acting as a ratchet that moves the RNA-DNA hybrid through the active site by switching from straight to bent conformations at each step of nucleotide addition. During transcription elongation, Pol II moves on the template as the transcript elongates. The chain is DNA-directed RNA polymerase II subunit RPB1-B (TRP5.9) from Trypanosoma brucei brucei.